The chain runs to 61 residues: Small ribosomal subunit protein uS14B (61 aa).

Residues C24, C27, C40, and C43 each contribute to the Zn(2+) site.

Belongs to the universal ribosomal protein uS14 family. Zinc-binding uS14 subfamily. As to quaternary structure, part of the 30S ribosomal subunit. Contacts proteins S3 and S10. It depends on Zn(2+) as a cofactor.

Its function is as follows. Binds 16S rRNA, required for the assembly of 30S particles and may also be responsible for determining the conformation of the 16S rRNA at the A site. This chain is Small ribosomal subunit protein uS14B, found in Salinispora arenicola (strain CNS-205).